The following is a 96-amino-acid chain: MPAIEVGRICVKVKGREAGSKCVIVDIIDDNFVLVTGPKDISGVKRRRVNILHLEPTDKKIDIQKGASDEEVRKKIEEAGLTEYMKERIKIKIPTL.

The protein belongs to the eukaryotic ribosomal protein eL14 family.

This is Large ribosomal subunit protein eL14 from Saccharolobus islandicus (strain Y.N.15.51 / Yellowstone #2) (Sulfolobus islandicus).